Here is a 212-residue protein sequence, read N- to C-terminus: HTH-type transcriptional regulator RutR (212 aa).

In terms of domain architecture, HTH tetR-type spans 17-77; it reads SAKKKAILSA…AVLRQILDIW (61 aa). The segment at residues 39 to 58 is a DNA-binding region (H-T-H motif); that stretch reads TRLEQIAELAGVSKTNLLYY.

Homodimer.

Functionally, master transcription regulator which represses the degradation of pyrimidines (rutABCDEFG) and purines (gcl operon) for maintenance of metabolic balance between pyrimidines and purines. It also regulates the synthesis of pyrimidine nucleotides and arginine from glutamine (carAB) and the supply of glutamate (gadABWX). This is HTH-type transcriptional regulator RutR (rutR) from Escherichia coli O157:H7.